A 274-amino-acid polypeptide reads, in one-letter code: MLSVAARSGPFAPVLSAKSRGVXXXXXXXXXXXXXXTPEPPVLDPKRPILSRESLSGQAARRPLVASVGLNVPASVRYSHTDIKVPDFSDYRRSEVLDKTKSSRESSDARKVFSYMVTATTAVGVTYAAKSIVTQFISSMSASADVLAMSKIEIKLSDIPEGKNMAFKWRGKPLFVRHRTQKEIEQEAAVELSQLRDPQHDLDRVKKPEWMILIGVCTHLGCVPIANAGDFGGYYCPCHGSHYDASGRIRKGPAPLNLEVPTYEFLSDDMVVVG.

The tract at residues 29-49 is disordered; it reads XXXXXXXXTPEPPVLDPKRPI. The Mitochondrial matrix portion of the chain corresponds to 79 to 103; it reads SHTDIKVPDFSDYRRSEVLDKTKSS. The helical transmembrane segment at 104 to 140 threads the bilayer; that stretch reads RESSDARKVFSYMVTATTAVGVTYAAKSIVTQFISSM. The Mitochondrial intermembrane segment spans residues 141–274; that stretch reads SASADVLAMS…FLSDDMVVVG (134 aa). A Rieske domain is found at 187–272; that stretch reads EAAVELSQLR…YEFLSDDMVV (86 aa). 5 residues coordinate [2Fe-2S] cluster: Cys217, His219, Cys236, His239, and Ser241. An intrachain disulfide couples Cys222 to Cys238.

It belongs to the Rieske iron-sulfur protein family. Component of the ubiquinol-cytochrome c oxidoreductase (cytochrome b-c1 complex, complex III, CIII), a multisubunit enzyme composed of 11 subunits. The complex is composed of 3 respiratory subunits cytochrome b, cytochrome c1 and Rieske protein UQCRFS1, 2 core protein subunits UQCRC1/QCR1 and UQCRC2/QCR2, and 6 low-molecular weight protein subunits UQCRH/QCR6, UQCRB/QCR7, UQCRQ/QCR8, UQCR10/QCR9, UQCR11/QCR10 and subunit 9, the cleavage product of Rieske protein UQCRFS1. The complex exists as an obligatory dimer and forms supercomplexes (SCs) in the inner mitochondrial membrane with NADH-ubiquinone oxidoreductase (complex I, CI) and cytochrome c oxidase (complex IV, CIV), resulting in different assemblies (supercomplex SCI(1)III(2)IV(1) and megacomplex MCI(2)III(2)IV(2)). Incorporation of the Rieske protein UQCRFS1 is the penultimate step in complex III assembly. Interacts with TTC19, which is involved in the clearance of UQCRFS1 fragments. In terms of assembly, component of the ubiquinol-cytochrome c oxidoreductase (cytochrome b-c1 complex, complex III, CIII). Subunit 9 corresponds to the mitochondrial targeting sequence (MTS) of Rieske protein UQCRFS1. It is retained after processing and incorporated inside complex III, where it remains bound to the complex and localizes between the 2 core subunits UQCRC1/QCR1 and UQCRC2/QCR2. Requires [2Fe-2S] cluster as cofactor. Proteolytic processing is necessary for the correct insertion of UQCRFS1 in the complex III dimer. Several fragments are generated during UQCRFS1 insertion, most probably due to the endogenous matrix-processing peptidase (MPP) activity of the 2 core protein subunits UQCRC1/QCR1 and UQCRC2/QCR2, which are homologous to the 2 mitochondrial-processing peptidase (MPP) subunits beta-MPP and alpha-MPP respectively. The action of the protease is also necessary for the clearance of the UQCRFS1 fragments.

Its subcellular location is the mitochondrion inner membrane. It carries out the reaction a quinol + 2 Fe(III)-[cytochrome c](out) = a quinone + 2 Fe(II)-[cytochrome c](out) + 2 H(+)(out). Functionally, component of the ubiquinol-cytochrome c oxidoreductase, a multisubunit transmembrane complex that is part of the mitochondrial electron transport chain which drives oxidative phosphorylation. The respiratory chain contains 3 multisubunit complexes succinate dehydrogenase (complex II, CII), ubiquinol-cytochrome c oxidoreductase (cytochrome b-c1 complex, complex III, CIII) and cytochrome c oxidase (complex IV, CIV), that cooperate to transfer electrons derived from NADH and succinate to molecular oxygen, creating an electrochemical gradient over the inner membrane that drives transmembrane transport and the ATP synthase. The cytochrome b-c1 complex catalyzes electron transfer from ubiquinol to cytochrome c, linking this redox reaction to translocation of protons across the mitochondrial inner membrane, with protons being carried across the membrane as hydrogens on the quinol. In the process called Q cycle, 2 protons are consumed from the matrix, 4 protons are released into the intermembrane space and 2 electrons are passed to cytochrome c. The Rieske protein is a catalytic core subunit containing a [2Fe-2S] iron-sulfur cluster. It cycles between 2 conformational states during catalysis to transfer electrons from the quinol bound in the Q(0) site in cytochrome b to cytochrome c1. Incorporation of UQCRFS1 is the penultimate step in complex III assembly. Component of the ubiquinol-cytochrome c oxidoreductase (cytochrome b-c1 complex, complex III, CIII). UQCRFS1 undergoes proteolytic processing once it is incorporated in the complex III dimer. One of the fragments, called subunit 9, corresponds to its mitochondrial targeting sequence (MTS). The proteolytic processing is necessary for the correct insertion of UQCRFS1 in the complex III dimer, but the persistence of UQCRFS1-derived fragments may prevent newly imported UQCRFS1 to be processed and assembled into complex III and is detrimental for the complex III structure and function. This Saimiri sciureus (Common squirrel monkey) protein is Cytochrome b-c1 complex subunit Rieske, mitochondrial (UQCRFS1).